A 519-amino-acid chain; its full sequence is Circadian clock oscillator protein KaiC 1 (519 aa).

2 consecutive KaiC domains span residues Met-1–Phe-248 and Ala-262–Glu-519. Gly-50, Thr-51, Gly-52, Lys-53, Thr-54, Leu-55, Ser-90, Lys-225, Leu-226, Arg-227, Thr-229, His-231, Thr-241, Thr-291, Gly-292, Thr-293, Gly-294, Lys-295, Thr-296, and Leu-297 together coordinate ATP. Thr-54 is a binding site for Mg(2+). Thr-296 serves as a coordination point for Mg(2+). Glu-319 is a binding site for Mg(2+). Residue Trp-332 coordinates ATP. A Phosphoserine; by autocatalysis modification is found at Ser-432. Thr-433 carries the phosphothreonine; by autocatalysis modification. ATP contacts are provided by Arg-452, Lys-458, Met-459, Arg-460, Ser-462, His-464, and Lys-466.

This sequence belongs to the KaiC family. As to quaternary structure, homohexamer; hexamerization is dependent on ATP-binding. Core component of the KaiABC complex, at least composed of a KaiC homohexamer, a KaiB dimer and two KaiA dimers. Interacts directly with SasA. Multimerizes, probably forming homohexamers, no interaction with KaiC2 or KaiC3 is seen. Interacts with KaiA. In another study interacts with itself, KaiB1, KaiB3 and KaiC3. Interacts with SasA (hik8). Requires Mg(2+) as cofactor. Phosphorylated on serine and threonine residues by autocatalysis. Has a 4 step phosphorylation cycle; the autokinase acts first on Thr-433, then Ser-432. When Ser-432 is modified KaiC switches to an autophosphatase mode, acting first on phospho-Thr-433 then phospho-Ser-432.

It carries out the reaction L-seryl-[protein] + ATP = O-phospho-L-seryl-[protein] + ADP + H(+). It catalyses the reaction L-threonyl-[protein] + ATP = O-phospho-L-threonyl-[protein] + ADP + H(+). The catalysed reaction is ATP + H2O = ADP + phosphate + H(+). Its activity is regulated as follows. The interaction with KaiA enhances its phosphorylation status, while the interaction with KaiB decreases it. Its function is as follows. Component of the oscillator and circadian clock in this organism, enhances fitness in a rhythmic environment. Autophosphorylates in the presence of KaiA, no activity is seen in its absence. Functionally, central component of the KaiABC oscillator complex, which constitutes the main circadian regulator in cyanobacteria. Complex composition changes during the circadian cycle to control KaiC phosphorylation. KaiA stimulates KaiC autophosphorylation, while KaiB sequesters KaiA, leading to KaiC autodephosphorylation. Clock output pathways impact the RpaA transcriptional regulator. KaiC enhances the autophosphorylation activity of SasA, which then transfers its phosphate group to RpaA to activate it. KaiB and KaiC together enhance the phospho-RpaA dephosphatase activity of CikA. In terms of biological role, has a weak, temperature-independent ATPase activity; ATPase activity defines the circadian period. The phosphorylation state of KaiC modulates its ATPase activity and effects KaiB binding. The chain is Circadian clock oscillator protein KaiC 1 from Synechocystis sp. (strain ATCC 27184 / PCC 6803 / Kazusa).